A 230-amino-acid polypeptide reads, in one-letter code: Demethylmenaquinone methyltransferase (230 aa).

S-adenosyl-L-methionine is bound by residues threonine 62, aspartate 80, 100-101 (DG), and serine 117.

The protein belongs to the class I-like SAM-binding methyltransferase superfamily. MenG/UbiE family.

It catalyses the reaction a 2-demethylmenaquinol + S-adenosyl-L-methionine = a menaquinol + S-adenosyl-L-homocysteine + H(+). It participates in quinol/quinone metabolism; menaquinone biosynthesis; menaquinol from 1,4-dihydroxy-2-naphthoate: step 2/2. Functionally, methyltransferase required for the conversion of demethylmenaquinol (DMKH2) to menaquinol (MKH2). The sequence is that of Demethylmenaquinone methyltransferase from Corynebacterium urealyticum (strain ATCC 43042 / DSM 7109).